We begin with the raw amino-acid sequence, 172 residues long: Shikimate kinase (172 aa).

11–16 contacts ATP; it reads GAGKST. A Mg(2+)-binding site is contributed by Ser-15. Asp-33, Arg-57, and Gly-79 together coordinate substrate. ATP is bound at residue Arg-117. Arg-136 is a substrate binding site. Arg-153 is an ATP binding site.

This sequence belongs to the shikimate kinase family. As to quaternary structure, monomer. Requires Mg(2+) as cofactor.

The protein localises to the cytoplasm. It carries out the reaction shikimate + ATP = 3-phosphoshikimate + ADP + H(+). Its pathway is metabolic intermediate biosynthesis; chorismate biosynthesis; chorismate from D-erythrose 4-phosphate and phosphoenolpyruvate: step 5/7. In terms of biological role, catalyzes the specific phosphorylation of the 3-hydroxyl group of shikimic acid using ATP as a cosubstrate. This Pseudomonas putida (strain ATCC 700007 / DSM 6899 / JCM 31910 / BCRC 17059 / LMG 24140 / F1) protein is Shikimate kinase.